Reading from the N-terminus, the 293-residue chain is Serine-threonine kinase receptor-associated protein (293 aa).

WD repeat units lie at residues 9–53, 54–93, 95–134, 138–178, 180–217, 219–258, and 261–293; these read GHSR…GTFE, GHKG…EILS, EHQS…DPLL, GHTN…QVSL, AKSS…PLKV, SLPF…EIEV, and GHHG…WKGM.

The protein belongs to the WD repeat STRAP family. As to quaternary structure, part of the core SMN complex.

In terms of biological role, the SMN complex catalyzes the assembly of small nuclear ribonucleoproteins (snRNPs), the building blocks of the spliceosome, and thereby plays an important role in the splicing of cellular pre-mRNAs. Most spliceosomal snRNPs contain a common set of Sm proteins SNRPB, SNRPD1, SNRPD2, SNRPD3, SNRPE, SNRPF and SNRPG that assemble in a heptameric protein ring on the Sm site of the small nuclear RNA to form the core snRNP (Sm core). In the cytosol, the Sm proteins SNRPD1, SNRPD2, SNRPE, SNRPF and SNRPG are trapped in an inactive 6S pICln-Sm complex by the chaperone CLNS1A that controls the assembly of the core snRNP. To assemble core snRNPs, the SMN complex accepts the trapped 5Sm proteins from CLNS1A forming an intermediate. Binding of snRNA inside 5Sm triggers eviction of the SMN complex, thereby allowing binding of SNRPD3 and SNRPB to complete assembly of the core snRNP. STRAP may play a role in the cellular distribution of the SMN complex. This chain is Serine-threonine kinase receptor-associated protein (strap), found in Dictyostelium discoideum (Social amoeba).